Here is a 365-residue protein sequence, read N- to C-terminus: Donuts protein 1 (365 aa).

Residues 28-49 (NSGLELPSQDYTNVEEKESSPK) are disordered. The CUE domain maps to 82–125 (EKLCVLKELKIAFPEVDDTLIKAILIASQGVLEPAFNSLLYYSS). Disordered stretches follow at residues 215–246 (HNTILSNEDSILKGKEKGKEEEKEKGEEKGVN) and 286–335 (ESEE…YKSA). Residues 224–244 (SILKGKEKGKEEEKEKGEEKG) show a composition bias toward basic and acidic residues. The span at 286–295 (ESEEEEEQDV) shows a compositional bias: acidic residues. A compositionally biased stretch (basic and acidic residues) spans 315-331 (EAQRDSADRLPAKDDGG).

May interact directly with ADY3. Probable component of a spindle pole body (SPB) complex composed of ADY3, SSP1, DON1, MPC54, SPO21/MPC70, NUD1 and CNM67.

It is found in the prospore membrane. Functionally, involved in the pathway that organizes the prospore membrane (PSM) during sporulation. This chain is Donuts protein 1 (DON1), found in Saccharomyces cerevisiae (strain ATCC 204508 / S288c) (Baker's yeast).